A 620-amino-acid polypeptide reads, in one-letter code: Dihydroxy-acid dehydratase (620 aa).

Position 82 (D82) interacts with Mg(2+). C123 contributes to the [2Fe-2S] cluster binding site. 2 residues coordinate Mg(2+): D124 and K125. At K125 the chain carries N6-carboxylysine. A [2Fe-2S] cluster-binding site is contributed by C197. E493 contacts Mg(2+). S519 serves as the catalytic Proton acceptor.

Belongs to the IlvD/Edd family. As to quaternary structure, homodimer. The cofactor is [2Fe-2S] cluster. It depends on Mg(2+) as a cofactor.

The enzyme catalyses (2R)-2,3-dihydroxy-3-methylbutanoate = 3-methyl-2-oxobutanoate + H2O. It catalyses the reaction (2R,3R)-2,3-dihydroxy-3-methylpentanoate = (S)-3-methyl-2-oxopentanoate + H2O. The protein operates within amino-acid biosynthesis; L-isoleucine biosynthesis; L-isoleucine from 2-oxobutanoate: step 3/4. Its pathway is amino-acid biosynthesis; L-valine biosynthesis; L-valine from pyruvate: step 3/4. Functions in the biosynthesis of branched-chain amino acids. Catalyzes the dehydration of (2R,3R)-2,3-dihydroxy-3-methylpentanoate (2,3-dihydroxy-3-methylvalerate) into 2-oxo-3-methylpentanoate (2-oxo-3-methylvalerate) and of (2R)-2,3-dihydroxy-3-methylbutanoate (2,3-dihydroxyisovalerate) into 2-oxo-3-methylbutanoate (2-oxoisovalerate), the penultimate precursor to L-isoleucine and L-valine, respectively. The protein is Dihydroxy-acid dehydratase of Bifidobacterium longum (strain NCC 2705).